A 225-amino-acid chain; its full sequence is UPF0173 metal-dependent hydrolase PAE2160 (225 aa).

This sequence belongs to the UPF0173 family.

The polypeptide is UPF0173 metal-dependent hydrolase PAE2160 (Pyrobaculum aerophilum (strain ATCC 51768 / DSM 7523 / JCM 9630 / CIP 104966 / NBRC 100827 / IM2)).